Here is a 652-residue protein sequence, read N- to C-terminus: DNA ligase (652 aa).

NAD(+) is bound by residues 29 to 33 (DAEYD), 78 to 79 (SL), and E107. K109 functions as the N6-AMP-lysine intermediate in the catalytic mechanism. NAD(+)-binding residues include R130, E164, K278, and K302. Zn(2+) contacts are provided by C395, C398, C413, and C418. A BRCT domain is found at 577–652 (TDDAILSGKT…VKDEAWLLDL (76 aa)).

This sequence belongs to the NAD-dependent DNA ligase family. LigA subfamily. Mg(2+) is required as a cofactor. Mn(2+) serves as cofactor.

It carries out the reaction NAD(+) + (deoxyribonucleotide)n-3'-hydroxyl + 5'-phospho-(deoxyribonucleotide)m = (deoxyribonucleotide)n+m + AMP + beta-nicotinamide D-nucleotide.. Functionally, DNA ligase that catalyzes the formation of phosphodiester linkages between 5'-phosphoryl and 3'-hydroxyl groups in double-stranded DNA using NAD as a coenzyme and as the energy source for the reaction. It is essential for DNA replication and repair of damaged DNA. This is DNA ligase from Streptococcus thermophilus (strain ATCC BAA-491 / LMD-9).